The primary structure comprises 416 residues: Chorismate synthase (416 aa).

The NADP(+) site is built by R40 and R46. FMN is bound by residues 135 to 137 (RAS), 256 to 257 (QA), G300, 315 to 319 (KPIAT), and R341.

The protein belongs to the chorismate synthase family. As to quaternary structure, homotetramer. The cofactor is FMNH2.

It carries out the reaction 5-O-(1-carboxyvinyl)-3-phosphoshikimate = chorismate + phosphate. Its pathway is metabolic intermediate biosynthesis; chorismate biosynthesis; chorismate from D-erythrose 4-phosphate and phosphoenolpyruvate: step 7/7. Catalyzes the anti-1,4-elimination of the C-3 phosphate and the C-6 proR hydrogen from 5-enolpyruvylshikimate-3-phosphate (EPSP) to yield chorismate, which is the branch point compound that serves as the starting substrate for the three terminal pathways of aromatic amino acid biosynthesis. This reaction introduces a second double bond into the aromatic ring system. This is Chorismate synthase from Kocuria rhizophila (strain ATCC 9341 / DSM 348 / NBRC 103217 / DC2201).